The following is a 262-amino-acid chain: Polyamine aminopropyltransferase (262 aa).

Positions 1-249 (MWITQEITPY…DIHRAAFALP (249 aa)) constitute a PABS domain. Asn29 is an S-methyl-5'-thioadenosine binding site. Position 83 (Asp83) interacts with spermidine. Asp155 acts as the Proton acceptor in catalysis.

This sequence belongs to the spermidine/spermine synthase family. Homodimer or homotetramer.

Its subcellular location is the cytoplasm. The catalysed reaction is S-adenosyl 3-(methylsulfanyl)propylamine + putrescine = S-methyl-5'-thioadenosine + spermidine + H(+). Its pathway is amine and polyamine biosynthesis; spermidine biosynthesis; spermidine from putrescine: step 1/1. Its function is as follows. Catalyzes the irreversible transfer of a propylamine group from the amino donor S-adenosylmethioninamine (decarboxy-AdoMet) to putrescine (1,4-diaminobutane) to yield spermidine. The chain is Polyamine aminopropyltransferase from Helicobacter pylori (strain HPAG1).